The chain runs to 457 residues: Siroheme synthase (457 aa).

Residues 1–204 (MDHLPIFCQL…NDQKAITETT (204 aa)) are precorrin-2 dehydrogenase /sirohydrochlorin ferrochelatase. Residues 22–23 (DV) and 43–44 (LA) contribute to the NAD(+) site. Residue Ser-128 is modified to Phosphoserine. A uroporphyrinogen-III C-methyltransferase region spans residues 216–457 (GEVVLVGAGP…RDKLNWFSNH (242 aa)). Residue Pro-225 participates in S-adenosyl-L-methionine binding. Asp-248 (proton acceptor) is an active-site residue. Residue Lys-270 is the Proton donor of the active site. S-adenosyl-L-methionine-binding positions include 301–303 (GGD), Ile-306, 331–332 (TA), Met-382, and Gly-411.

It in the N-terminal section; belongs to the precorrin-2 dehydrogenase / sirohydrochlorin ferrochelatase family. The protein in the C-terminal section; belongs to the precorrin methyltransferase family.

The enzyme catalyses uroporphyrinogen III + 2 S-adenosyl-L-methionine = precorrin-2 + 2 S-adenosyl-L-homocysteine + H(+). It carries out the reaction precorrin-2 + NAD(+) = sirohydrochlorin + NADH + 2 H(+). It catalyses the reaction siroheme + 2 H(+) = sirohydrochlorin + Fe(2+). It functions in the pathway cofactor biosynthesis; adenosylcobalamin biosynthesis; precorrin-2 from uroporphyrinogen III: step 1/1. It participates in cofactor biosynthesis; adenosylcobalamin biosynthesis; sirohydrochlorin from precorrin-2: step 1/1. The protein operates within porphyrin-containing compound metabolism; siroheme biosynthesis; precorrin-2 from uroporphyrinogen III: step 1/1. Its pathway is porphyrin-containing compound metabolism; siroheme biosynthesis; siroheme from sirohydrochlorin: step 1/1. It functions in the pathway porphyrin-containing compound metabolism; siroheme biosynthesis; sirohydrochlorin from precorrin-2: step 1/1. In terms of biological role, multifunctional enzyme that catalyzes the SAM-dependent methylations of uroporphyrinogen III at position C-2 and C-7 to form precorrin-2 via precorrin-1. Then it catalyzes the NAD-dependent ring dehydrogenation of precorrin-2 to yield sirohydrochlorin. Finally, it catalyzes the ferrochelation of sirohydrochlorin to yield siroheme. In Escherichia coli O81 (strain ED1a), this protein is Siroheme synthase.